A 462-amino-acid polypeptide reads, in one-letter code: Myrosinase-binding protein 1 (462 aa).

Residues 1 to 23 are disordered; it reads MSTGGPQKLEAQGGKEGKEWDDG. Jacalin-type lectin domains are found at residues 6 to 148, 157 to 300, and 310 to 453; these read PQKL…YFAP, PNKV…YFAP, and TKKL…HIVP. Residues 13-23 are compositionally biased toward basic and acidic residues; it reads GGKEGKEWDDG.

Belongs to the jacalin lectin family. In terms of tissue distribution, expressed exclusively in flowers, in male and female organs, petals and pedicels. Not detected in pollen grains or sepals.

This is Myrosinase-binding protein 1 (MBP1) from Arabidopsis thaliana (Mouse-ear cress).